A 580-amino-acid chain; its full sequence is CTP synthase (580 aa).

Residues 304-559 (NIILVGKYVS…VAASSGCLDE (256 aa)) form the Glutamine amidotransferase type-1 domain. Active-site for GATase activity residues include C403, H532, and E534.

It belongs to the CTP synthase family.

The enzyme catalyses UTP + L-glutamine + ATP + H2O = CTP + L-glutamate + ADP + phosphate + 2 H(+). It participates in pyrimidine metabolism; CTP biosynthesis via de novo pathway; CTP from UDP: step 2/2. Functionally, catalyzes the ATP-dependent amination of UTP to CTP with either L-glutamine or ammonia as the source of nitrogen. This chain is CTP synthase (URA7), found in Gibberella zeae (strain ATCC MYA-4620 / CBS 123657 / FGSC 9075 / NRRL 31084 / PH-1) (Wheat head blight fungus).